We begin with the raw amino-acid sequence, 307 residues long: Transcription factor DIVARICATA (307 aa).

Residues 21-74 enclose the SANT domain; the sequence is RSTTRWTAAENKAFENALAVFDENTPNRWERVAERVPGKTVGDVMRQYKELEDD. Positions 109 to 133 are disordered; the sequence is QSYGTGGRKSSSGRPSEQERKKGVP. Basic and acidic residues predominate over residues 124-133; that stretch reads SEQERKKGVP. The HTH myb-type domain occupies 126–182; the sequence is QERKKGVPWTEEEHKLFLMGLKKYGKGDWRNISRNFVITRTPTQVASHAQKYFIRQL. Positions 154-178 form a DNA-binding region, H-T-H motif; it reads WRNISRNFVITRTPTQVASHAQKYF. Composition is skewed to polar residues over residues 196-206 and 222-231; these read ITTVNLSDNQT and MAQQQTSSTS. A disordered region spans residues 196-231; that stretch reads ITTVNLSDNQTPSPDNKKPPSSPDHSMAQQQTSSTS.

The protein resides in the nucleus. Functionally, involved in the dorsovental asymmetry of flowers. Promotes ventral identity. The chain is Transcription factor DIVARICATA (DIVARICATA) from Antirrhinum majus (Garden snapdragon).